Reading from the N-terminus, the 100-residue chain is UPF0213 protein YhbQ (100 aa).

The 76-residue stretch at 2–77 folds into the GIY-YIG domain; that stretch reads TPWYLYLIRT…KQLTKRQKER (76 aa).

It belongs to the UPF0213 family.

The chain is UPF0213 protein YhbQ from Escherichia coli O8 (strain IAI1).